The primary structure comprises 374 residues: N5-carboxyaminoimidazole ribonucleotide synthase (374 aa).

ATP is bound by residues Arg108, Lys148, 153–159 (GYDGKGQ), 183–186 (EKYL), Glu191, His214, and 266–267 (NE). The ATP-grasp domain occupies 112–296 (KETLKSAGTK…QFDTHILAVT (185 aa)).

This sequence belongs to the PurK/PurT family. As to quaternary structure, homodimer.

The catalysed reaction is 5-amino-1-(5-phospho-beta-D-ribosyl)imidazole + hydrogencarbonate + ATP = 5-carboxyamino-1-(5-phospho-D-ribosyl)imidazole + ADP + phosphate + 2 H(+). Its pathway is purine metabolism; IMP biosynthesis via de novo pathway; 5-amino-1-(5-phospho-D-ribosyl)imidazole-4-carboxylate from 5-amino-1-(5-phospho-D-ribosyl)imidazole (N5-CAIR route): step 1/2. Functionally, catalyzes the ATP-dependent conversion of 5-aminoimidazole ribonucleotide (AIR) and HCO(3)(-) to N5-carboxyaminoimidazole ribonucleotide (N5-CAIR). In Staphylococcus aureus (strain MSSA476), this protein is N5-carboxyaminoimidazole ribonucleotide synthase.